Consider the following 2343-residue polypeptide: MGSQTLQILRQGVWAALSGGWYYDPHQATFVNALHLYLWLFLLGLPFTLYMALPSSMIIVAVYCPVVAAVFIVLKMVNYRLHRALDAGEVVDRSANEFTDQRAKAEQGNCSTRRKDSNGPSDPGGGIEMSEFIREATPPVGCSSRNSYAGLDPSNQIGSGSSRLGTAATIKGDTDTAKTSDDISLSLGQSSSLCKEGSEEQDLATDRKLFRLVSNDSFVSIQPSLSSCGQDLPRDFSDKVSLPSHSQHHRVDQSLCSACDTEVASLVPLHSHSYRKEHRPRGVPRTSSSAVAFPDASLSGLPLYQQQQRRGLDPVTELDSSKPHSGTRESLVGQSCPLAQSQPAADRRKSYSQPPTKCGKSRALNAEKSVDSLRSLSTRSSGSTESYCSGTDRDTNSTLSSYKSEQTSSTHIESILSEHDESPKVGDKSARKEGCAESAEERCHGATDRRTSSDKTALEGSTPAGPPEAPDAQASEEKPDQVAPSSSASEDANKNPHANEFTVPGDRPPEQSAESKEEQGEKPSLSTDSKVCKDDGGKQKEGDVRPKSSSLIHRTTSAHKPGRRRTGKKRASSFDSSRHRDYVSFRGVSGTKPHSAIFCHDEDSSDQSDLSRAPSVHSAHHFSSDSSSSATSHSCQSPEGKYSALKTKHGHKDRGTDSDHTHRAHPGPEGTAKKRASRRTSSTHSAKTRARVLSLDSGTVACLNDSNRLLAPDSIKPLTTSKSDLEAKEGEVLDELSLLGRASQLETVTRSRNSLPSQVAFPEGEEQDAATGAAQASEEAVAFRRERSTFRRQAVRRRHNAGSNPTPPTLLIGPPLSLQDGQQGQQSTAQVKVQSRPPSQAAVLSASASLLVRKGSVHLDASHDHASAVGGSSLHDELGKFSSTLYETGGCDMSLVNFEPAARRASNICDTDSHVSSSTSVRFYPHDMLSLPQIRLNRLLTIDTDLLEQQDIDLSPDLAATYGPTEEAAQKVKHYYRFWILPQLWIGINFDRLTLLALFDRNREILENILAVVLAILVAFLGSILLIQGFFRDIWVFQFCLVIASCQYSLLKSVQPDSSSPRHGHNRIIAYSRPVYFCLCCGLIWLLDYGSRNLSTSKFKLYGITFTNPLVLLSARDLVIVFTLCFPIVFFIGLLPQVNTFVMYLCEQLDIHIFGGNATTSLLAALYSFLCSVVAVALLYGLCYGALRDSWDGQHIPVLFSVFCGLLVAVSYHLSRQSSDPSVLFSLIQSKIFPKTDEKNPEDPLSEVKDPLPEKLSNSVSERLQSDLVVCVVIGVLYFAIHVSTVFTALQPALKYVLYALVGFVGLVTHYVLPQVRKQLPWHCFSRPLLKTAEHNQYEVRNAATMMWFEKLHVWLLFVEKNVIYPLIVLNELSSSADTIASPKKLDTELGALMITVAGLKLLRSSFSSPTYQYITVIFTVLFFKFDYEAFSETMLLDLFFMSILFSKLWELLYKLQFVYTYVAPWQITWGSAFHAFAQPFAVPHSAMLFVQAVVSALFSTPLNPFLGSAIFITSYVRPVKFWERDYNTKRVDHSNTRLASQLDRNPGSDDNNLNSIFYEHLTRSLQHSLCGDLLLGRWGNYSTGDCFILASDYLNALVHLIETGNGLVTFQLRGLEFRGTYCQQREVEAITEGVEEDEGFCCCEPGHVPHVLSFNAAFGQRWLAWEVVVTKYILEGYSITDNSAASMLQVFDLRRVLTTYYVKGIIYYVTTSSKLEEWLANETMQEGLRLCADRNYVDVDPTFNPNIDEDYDHRLAGISRESFCVIYLNWIEYCSSRRAKPLDVDKDSSLVTLCYGLCVLGRRALGTASHHMSSNLESFLYGLHALFKGDFRISSVRDEWIFADMELLRKVVVPGIRMSIKLHQDHFTSPDEYDDPTVLYEAIVSHEKNLVIAHEGDPAWRSAVLANSPSLLALRHVMDDGTNEYKIIMLNRRYLSFRVIKVNKECVRGLWAGQQQELVFLRNRNPERGSIQNAKQALRNMINSSCDQPIGYPIFVSPLTTSYSDSHDQLKEILGGPISLGNIRDFIVSTWHRLRKGCGAGCNSGGNIEDSDTGGGTSCPANSATTASDPHNSVPQGSTGHPGQGAGSGLHPPTTSYPPTLGTSHSAHSVQSSLVRQSPARASMASQSSYCYGSRHSSLRMSTTGFVPCRRSSTSQISLRNLPSSIQSRLSMVNQMEAASQGGMGCVQHGLPSSSSSSQSIPACKHHTLVAFLGAEGSQSGATEAQPGNTSSPATISHARKGEVVYRVQIVDLSQILEGINVSKRKELQWPDEGIRLKAGRNSWKDWSPQEGMEGHVVHRWVPCSRDPSTRSHIDKTVLLVQIDDKYVTVIETGVLELGAEV.

Helical transmembrane passes span 33–53 (ALHL…YMAL) and 57–77 (MIIV…LKMV). 4 disordered regions span residues 98–163 (FTDQ…GSSR), 271–290 (SHSY…SSSA), 306–691 (QQQR…TRAR), and 749–826 (TRSR…QGQQ). Positions 143-163 (SSRNSYAGLDPSNQIGSGSSR) are enriched in polar residues. Over residues 272-282 (HSYRKEHRPRG) the composition is skewed to basic residues. Positions 372–390 (SLRSLSTRSSGSTESYCSG) are enriched in low complexity. Polar residues predominate over residues 396–412 (NSTLSSYKSEQTSSTHI). Basic and acidic residues-rich tracts occupy residues 416–457 (LSEH…DKTA), 507–521 (RPPE…EQGE), and 530–546 (KVCK…DVRP). A compositionally biased stretch (basic residues) spans 556 to 571 (TSAHKPGRRRTGKKRA). 3 stretches are compositionally biased toward low complexity: residues 624-637 (SDSS…SCQS), 769-780 (AATGAAQASEEA), and 809-826 (TLLI…QGQQ). 13 helical membrane-spanning segments follow: residues 978 to 998 (FWIL…LLAL), 1009 to 1029 (ILAV…LIQG), 1034 to 1054 (IWVF…LKSV), 1068 to 1088 (IIAY…WLLD), 1118 to 1138 (LVIV…LPQV), 1162 to 1182 (LLAA…LYGL), 1195 to 1215 (HIPV…YHLS), 1268 to 1288 (LVVC…TVFT), 1296 to 1316 (YVLY…LPQV), 1406 to 1426 (SFSS…FFKF), 1434 to 1454 (TMLL…ELLY), 1458 to 1478 (FVYT…HAFA), and 1493 to 1513 (AVVS…AIFI). The tract at residues 2050–2120 (EDSDTGGGTS…VQSSLVRQSP (71 aa)) is disordered. Composition is skewed to polar residues over residues 2060–2080 (CPAN…QGST) and 2094–2117 (PTTS…SLVR).

The protein belongs to the pecanex family. As to expression, specifically expressed in the germ line and not in the somatic cells of the testis, reaching its peak at the pachytene stage of the meiotic prophase. Detected in pachytene spermatocytes and round spermatids (at protein level).

The protein resides in the membrane. The protein is Pecanex-like protein 1 of Rattus norvegicus (Rat).